A 136-amino-acid polypeptide reads, in one-letter code: MADSFKFDLVSPERLLVSETVTEVVIPATLGEMTVLANHAPTMTTIKPGLVTVKFASGETHKYVVFGGFADILPTGCTLLAESAVSADDMSPDTLQKRIDAAKAEIQEGNHHHEHLTKLEKHLYELTNLHEVLVAA.

Belongs to the ATPase epsilon chain family. F-type ATPases have 2 components, CF(1) - the catalytic core - and CF(0) - the membrane proton channel. CF(1) has five subunits: alpha(3), beta(3), gamma(1), delta(1), epsilon(1). CF(0) has three main subunits: a, b and c.

It is found in the cell inner membrane. In terms of biological role, produces ATP from ADP in the presence of a proton gradient across the membrane. The sequence is that of ATP synthase epsilon chain from Agrobacterium fabrum (strain C58 / ATCC 33970) (Agrobacterium tumefaciens (strain C58)).